The primary structure comprises 537 residues: Putative cysteine ligase BshC (537 aa).

Residues 422 to 450 (IEKVEGMIEQQRRLNKDLLDEVAGNQNNI) are a coiled coil.

This sequence belongs to the BshC family.

Functionally, involved in bacillithiol (BSH) biosynthesis. May catalyze the last step of the pathway, the addition of cysteine to glucosamine malate (GlcN-Mal) to generate BSH. The polypeptide is Putative cysteine ligase BshC (Staphylococcus aureus (strain COL)).